A 248-amino-acid chain; its full sequence is Ubiquinone biosynthesis O-methyltransferase (248 aa).

Residues R41, G72, D93, and M136 each contribute to the S-adenosyl-L-methionine site.

It belongs to the methyltransferase superfamily. UbiG/COQ3 family.

It catalyses the reaction a 3-demethylubiquinol + S-adenosyl-L-methionine = a ubiquinol + S-adenosyl-L-homocysteine + H(+). It carries out the reaction a 3-(all-trans-polyprenyl)benzene-1,2-diol + S-adenosyl-L-methionine = a 2-methoxy-6-(all-trans-polyprenyl)phenol + S-adenosyl-L-homocysteine + H(+). It functions in the pathway cofactor biosynthesis; ubiquinone biosynthesis. Functionally, O-methyltransferase that catalyzes the 2 O-methylation steps in the ubiquinone biosynthetic pathway. In Rhizobium johnstonii (strain DSM 114642 / LMG 32736 / 3841) (Rhizobium leguminosarum bv. viciae), this protein is Ubiquinone biosynthesis O-methyltransferase.